Reading from the N-terminus, the 245-residue chain is uncharacterized protein (245 aa).

This is an uncharacterized protein from Dictyostelium discoideum (Social amoeba).